Reading from the N-terminus, the 268-residue chain is Hydroxyethylthiazole kinase 2 (268 aa).

Substrate is bound at residue methionine 42. ATP-binding residues include lysine 117 and threonine 167. Glycine 194 is a binding site for substrate.

It belongs to the Thz kinase family. The cofactor is Mg(2+).

The enzyme catalyses 5-(2-hydroxyethyl)-4-methylthiazole + ATP = 4-methyl-5-(2-phosphooxyethyl)-thiazole + ADP + H(+). The protein operates within cofactor biosynthesis; thiamine diphosphate biosynthesis; 4-methyl-5-(2-phosphoethyl)-thiazole from 5-(2-hydroxyethyl)-4-methylthiazole: step 1/1. Catalyzes the phosphorylation of the hydroxyl group of 4-methyl-5-beta-hydroxyethylthiazole (THZ). This chain is Hydroxyethylthiazole kinase 2, found in Streptococcus pneumoniae (strain CGSP14).